Reading from the N-terminus, the 548-residue chain is uncharacterized protein (548 aa).

Residues 8–200 (KLFADMIIQG…LLCVYEGFLK (193 aa)) form the DhaL domain.

This is an uncharacterized protein from Staphylococcus aureus (strain NCTC 8325 / PS 47).